Consider the following 256-residue polypeptide: Proteasome subunit alpha-type 8 (256 aa).

The protein belongs to the peptidase T1A family. In terms of assembly, component of the outer alpha-ring of the 20S proteasome core which is composed of 28 subunits that are arranged in four stacked rings, resulting in a barrel-shaped structure. The catalytic chamber with the active sites is on the inside of the barrel. Interacts with canonical subunits of the spermatoproteasome, including proteasome activators PSME4 (also called PA200) and PSME3 (also called PA28-gamma). Interacts with proteasome-interacting proteins chaperones, ubiquitin ligases and ubiquitin specific proteases. Interacts with meiotic proteins cyclin dependent kinase CDK1 and the ATPase TRIP13 as well as proteins of the synaptonemal complex SIX6OS1 and SYCE3.

It is found in the nucleus. Functionally, component of the spermatoproteasome, a proteasome specifically found in testis that promotes acetylation-dependent degradation of histones, thereby participating actively to the exchange of histones during spermatogenesis. The proteasome is a protein complex that degrades unneeded or damaged proteins by proteolysis, a chemical reaction that breaks peptide bonds. Required for 20S core proteasome assembly, essential for the degradation of meiotic proteins RAD51 and RPA1 at late prophase I and the progression of meiosis I during spermatogenesis. Localizes to the synaptonemal complex, a 'zipper'-like structure that holds homologous chromosome pairs in synapsis during meiotic prophase I. In Homo sapiens (Human), this protein is Proteasome subunit alpha-type 8 (PSMA8).